The following is an 88-amino-acid chain: DNA-directed RNA polymerase subunit omega (88 aa).

It belongs to the RNA polymerase subunit omega family. The RNAP catalytic core consists of 2 alpha, 1 beta, 1 beta' and 1 omega subunit. When a sigma factor is associated with the core the holoenzyme is formed, which can initiate transcription.

It catalyses the reaction RNA(n) + a ribonucleoside 5'-triphosphate = RNA(n+1) + diphosphate. In terms of biological role, promotes RNA polymerase assembly. Latches the N- and C-terminal regions of the beta' subunit thereby facilitating its interaction with the beta and alpha subunits. The protein is DNA-directed RNA polymerase subunit omega of Salinispora arenicola (strain CNS-205).